The primary structure comprises 597 residues: Elongation factor 4 (597 aa).

The tr-type G domain maps to 2 to 184; it reads KNIRNFSIIA…EIVAKIPAPT (183 aa). GTP contacts are provided by residues 14 to 19 and 131 to 134; these read DHGKST and NKID.

It belongs to the TRAFAC class translation factor GTPase superfamily. Classic translation factor GTPase family. LepA subfamily.

It is found in the cell inner membrane. It catalyses the reaction GTP + H2O = GDP + phosphate + H(+). Its function is as follows. Required for accurate and efficient protein synthesis under certain stress conditions. May act as a fidelity factor of the translation reaction, by catalyzing a one-codon backward translocation of tRNAs on improperly translocated ribosomes. Back-translocation proceeds from a post-translocation (POST) complex to a pre-translocation (PRE) complex, thus giving elongation factor G a second chance to translocate the tRNAs correctly. Binds to ribosomes in a GTP-dependent manner. This is Elongation factor 4 from Neisseria meningitidis serogroup B (strain ATCC BAA-335 / MC58).